The following is a 693-amino-acid chain: Kinesin-like protein KIFC1 (693 aa).

Disordered stretches follow at residues methionine 1–threonine 24 and valine 48–alanine 156. Low complexity-rich tracts occupy residues lysine 49–serine 59 and glutamine 127–proline 138. A phosphoserine mark is found at serine 52 and serine 59. Residues aspartate 165–phenylalanine 334 are a coiled coil. One can recognise a Kinesin motor domain in the interval asparagine 330–cysteine 683. Threonine 379 bears the Phosphothreonine mark. Residue glycine 430–threonine 437 coordinates ATP.

This sequence belongs to the TRAFAC class myosin-kinesin ATPase superfamily. Kinesin family. NCD subfamily. In terms of assembly, binds NUBP1 and NUBP2. Interacts with PPP1R42.

It is found in the nucleus. The protein resides in the cytoplasm. It localises to the cytoskeleton. The protein localises to the microtubule organizing center. Its subcellular location is the centrosome. It is found in the spindle. The protein resides in the early endosome. Its function is as follows. Minus end-directed microtubule-dependent motor required for bipolar spindle formation. May contribute to movement of early endocytic vesicles. Regulates cilium formation and structure. The sequence is that of Kinesin-like protein KIFC1 from Rattus norvegicus (Rat).